A 530-amino-acid polypeptide reads, in one-letter code: Histone-arginine methyltransferase CARMER (530 aa).

The 310-residue stretch at 141–450 (ASQYFQFYGY…QSYDVTIDLH (310 aa)) folds into the SAM-dependent MTase PRMT-type domain. Residues Gln154, Arg163, Gly187, Glu209, Glu238, and Thr266 each coordinate S-adenosyl-L-methionine. Arg501 carries the asymmetric dimethylarginine; by autocatalysis modification.

It belongs to the class I-like SAM-binding methyltransferase superfamily. Protein arginine N-methyltransferase family. Homodimer. The dimethylated protein is the major form.

It is found in the cytoplasm. It localises to the nucleus. It carries out the reaction L-arginyl-[protein] + 2 S-adenosyl-L-methionine = N(omega),N(omega)-dimethyl-L-arginyl-[protein] + 2 S-adenosyl-L-homocysteine + 2 H(+). In terms of biological role, methylates (mono- and asymmetric dimethylation) the guanidino nitrogens of arginyl residues in proteins. May methylate histone H3 at 'Arg-17' and activate transcription via chromatin remodeling. This chain is Histone-arginine methyltransferase CARMER (Art4), found in Drosophila simulans (Fruit fly).